Here is a 694-residue protein sequence, read N- to C-terminus: Glycine--tRNA ligase beta subunit (694 aa).

This sequence belongs to the class-II aminoacyl-tRNA synthetase family. As to quaternary structure, tetramer of two alpha and two beta subunits.

The protein localises to the cytoplasm. The catalysed reaction is tRNA(Gly) + glycine + ATP = glycyl-tRNA(Gly) + AMP + diphosphate. In Moorella thermoacetica (strain ATCC 39073 / JCM 9320), this protein is Glycine--tRNA ligase beta subunit.